The chain runs to 154 residues: UPF0260 protein NTHI1811 (154 aa).

The protein belongs to the UPF0260 family.

In Haemophilus influenzae (strain 86-028NP), this protein is UPF0260 protein NTHI1811.